Reading from the N-terminus, the 618-residue chain is 1-deoxy-D-xylulose-5-phosphate synthase (618 aa).

Thiamine diphosphate contacts are provided by residues His73 and 114–116; that span reads GHS. Residue Asp145 participates in Mg(2+) binding. Thiamine diphosphate-binding positions include 146 to 147, Asn174, Tyr284, and Glu364; that span reads GA. Asn174 provides a ligand contact to Mg(2+).

This sequence belongs to the transketolase family. DXPS subfamily. Homodimer. Mg(2+) serves as cofactor. The cofactor is thiamine diphosphate.

It carries out the reaction D-glyceraldehyde 3-phosphate + pyruvate + H(+) = 1-deoxy-D-xylulose 5-phosphate + CO2. The protein operates within metabolic intermediate biosynthesis; 1-deoxy-D-xylulose 5-phosphate biosynthesis; 1-deoxy-D-xylulose 5-phosphate from D-glyceraldehyde 3-phosphate and pyruvate: step 1/1. Functionally, catalyzes the acyloin condensation reaction between C atoms 2 and 3 of pyruvate and glyceraldehyde 3-phosphate to yield 1-deoxy-D-xylulose-5-phosphate (DXP). This chain is 1-deoxy-D-xylulose-5-phosphate synthase, found in Clostridium beijerinckii (strain ATCC 51743 / NCIMB 8052) (Clostridium acetobutylicum).